The primary structure comprises 86 residues: Putative pro-MCH-like protein 2 (86 aa).

Residues 31–49 (GSVAFPAENGVQDTESTLE) are NGE-like. Residues 40 to 60 (GVQDTESTLEKRETGDEENSA) are disordered. The tract at residues 52–64 (ETGDEENSAKFPI) is NEI-like. The tract at residues 68–86 (DFDTLRCMLGRVYQRCWQV) is melanin-concentrating hormone-like.

This sequence belongs to the melanin-concentrating hormone family. As to expression, expressed in testis but not in brain.

In Homo sapiens (Human), this protein is Putative pro-MCH-like protein 2 (PMCHL2).